A 157-amino-acid polypeptide reads, in one-letter code: MSSKKSAPGSANIAQNRQATHEYFIEERLEAGLVLEGWEVKSLRAGKAQLKESFVMLKNGEAWLFGAHFSPLPSASTHVQPDPTRSRKLLLHAEELSRLIGQVERKGYTLVPLSLYWKQGRAKLEIGLARGKKQHDKRAAEKERDWEREKQRVMRRG.

The interval 128-157 is disordered; the sequence is LARGKKQHDKRAAEKERDWEREKQRVMRRG. A compositionally biased stretch (basic and acidic residues) spans 137–157; that stretch reads KRAAEKERDWEREKQRVMRRG.

It belongs to the SmpB family.

The protein localises to the cytoplasm. In terms of biological role, required for rescue of stalled ribosomes mediated by trans-translation. Binds to transfer-messenger RNA (tmRNA), required for stable association of tmRNA with ribosomes. tmRNA and SmpB together mimic tRNA shape, replacing the anticodon stem-loop with SmpB. tmRNA is encoded by the ssrA gene; the 2 termini fold to resemble tRNA(Ala) and it encodes a 'tag peptide', a short internal open reading frame. During trans-translation Ala-aminoacylated tmRNA acts like a tRNA, entering the A-site of stalled ribosomes, displacing the stalled mRNA. The ribosome then switches to translate the ORF on the tmRNA; the nascent peptide is terminated with the 'tag peptide' encoded by the tmRNA and targeted for degradation. The ribosome is freed to recommence translation, which seems to be the essential function of trans-translation. This chain is SsrA-binding protein, found in Methylococcus capsulatus (strain ATCC 33009 / NCIMB 11132 / Bath).